Consider the following 351-residue polypeptide: Glycerol-1-phosphate dehydrogenase [NAD(P)+] (351 aa).

Residues 97–101 (GTVID) and 119–122 (TSPS) contribute to the NAD(+) site. Residue D124 coordinates substrate. S128 contacts NAD(+). Residue D171 coordinates substrate. Residues D171 and H251 each coordinate Zn(2+). H255 serves as a coordination point for substrate. H267 contributes to the Zn(2+) binding site.

This sequence belongs to the glycerol-1-phosphate dehydrogenase family. In terms of assembly, homodimer. It depends on Zn(2+) as a cofactor.

The protein localises to the cytoplasm. It carries out the reaction sn-glycerol 1-phosphate + NAD(+) = dihydroxyacetone phosphate + NADH + H(+). It catalyses the reaction sn-glycerol 1-phosphate + NADP(+) = dihydroxyacetone phosphate + NADPH + H(+). The protein operates within membrane lipid metabolism; glycerophospholipid metabolism. In terms of biological role, catalyzes the NAD(P)H-dependent reduction of dihydroxyacetonephosphate (DHAP or glycerone phosphate) to glycerol 1-phosphate (G1P). The G1P thus generated is used as the glycerophosphate backbone of phospholipids in the cellular membranes of Archaea. The protein is Glycerol-1-phosphate dehydrogenase [NAD(P)+] of Sulfolobus acidocaldarius (strain ATCC 33909 / DSM 639 / JCM 8929 / NBRC 15157 / NCIMB 11770).